The sequence spans 380 residues: Erythronate-4-phosphate dehydrogenase (380 aa).

Residues S45 and T66 each coordinate substrate. Residues D146, T174, 205 to 207 (ASR), and D231 contribute to the NAD(+) site. The active site involves R207. The active site involves E236. The Proton donor role is filled by H253. Position 256 (G256) interacts with NAD(+). Y257 is a binding site for substrate.

The protein belongs to the D-isomer specific 2-hydroxyacid dehydrogenase family. PdxB subfamily. As to quaternary structure, homodimer.

The protein resides in the cytoplasm. The catalysed reaction is 4-phospho-D-erythronate + NAD(+) = (R)-3-hydroxy-2-oxo-4-phosphooxybutanoate + NADH + H(+). The protein operates within cofactor biosynthesis; pyridoxine 5'-phosphate biosynthesis; pyridoxine 5'-phosphate from D-erythrose 4-phosphate: step 2/5. Functionally, catalyzes the oxidation of erythronate-4-phosphate to 3-hydroxy-2-oxo-4-phosphonooxybutanoate. This Pseudomonas putida (strain W619) protein is Erythronate-4-phosphate dehydrogenase.